A 184-amino-acid polypeptide reads, in one-letter code: Gremlin-1 (184 aa).

A signal peptide spans 1–24 (MVRTLYAIGAVFLLTGFLLPTAEG). The tract at residues 24 to 77 (GRKRNRGSQGAIPPPDKDQPNDSEQMQTQQQSGSRHRERGKGTSMPAEEVLESS) is disordered. An N-linked (GlcNAc...) asparagine glycan is attached at Asn44. The span at 45-56 (DSEQMQTQQQSG) shows a compositional bias: polar residues. Disulfide bonds link Cys94–Cys144, Cys108–Cys158, Cys118–Cys176, and Cys122–Cys178. The 91-residue stretch at 94–184 (CKTQPLKQTI…ECRCISIDLD (91 aa)) folds into the CTCK domain.

The protein belongs to the DAN family.

Its subcellular location is the secreted. Its function is as follows. Cytokine that may play a role in the development of the medial pallium and during optic nerve and pecten development by modulating BMP signaling. The polypeptide is Gremlin-1 (GREM1) (Gallus gallus (Chicken)).